The primary structure comprises 539 residues: Laccase-1 (539 aa).

The first 21 residues, 1–21 (MAFTAISLFLAALGVINTAFA), serve as a signal peptide directing secretion. Plastocyanin-like domains are found at residues 37–154 (AEVN…YDPE) and 166–309 (ESTV…HYLG). Asn78 is a glycosylation site (N-linked (GlcNAc...) asparagine). Residues His88 and His90 each contribute to the Cu cation site. 2 disulfides stabilise this stretch: Cys109–Cys513 and Cys141–Cys228. Asn120 is a glycosylation site (N-linked (GlcNAc...) asparagine). Cu cation contacts are provided by His133 and His135. N-linked (GlcNAc...) asparagine glycans are attached at residues Asn202, Asn233, Asn240, Asn293, Asn318, Asn353, Asn385, and Asn405. In terms of domain architecture, Plastocyanin-like 3 spans 374–495 (SPTVPVLLQI…GFAVVMAEDP (122 aa)). Residues His421, His424, and His426 each coordinate Cu cation. N-linked (GlcNAc...) asparagine glycosylation occurs at Asn457. 4 residues coordinate Cu cation: His476, Cys477, His478, and His482. Asn532 carries an N-linked (GlcNAc...) asparagine glycan.

It belongs to the multicopper oxidase family. It depends on Cu cation as a cofactor.

It localises to the secreted. It carries out the reaction 4 hydroquinone + O2 = 4 benzosemiquinone + 2 H2O. With respect to regulation, inhibited by chloride ions. Inhibited by citrate. Inhibited by oxalate. Activated by acetate. In vitro, has activity towards 2,2'-azino-bis(3-ethylbenzthiazoline-6-sulfonic acid) (ABTS), 2,6-dimethoxy-phenol, and guaiacol. Although brown rot fungi preferentially degrade hemicellulose and cellulose, the enzyme may contribute to generating small amounts of lignin breakdown products required for catalytic reactions. In Fomitopsis schrenkii (Brown rot fungus), this protein is Laccase-1.